The primary structure comprises 540 residues: 2-isopropylmalate synthase (540 aa).

One can recognise a Pyruvate carboxyltransferase domain in the interval 8-273; sequence VLIFDTTLRD…FFGRDQDSPT (266 aa). Residues Asp17, His208, His210, and Asn244 each contribute to the Mn(2+) site. A regulatory domain region spans residues 408 to 540; it reads QLQLVQVSCG…AVVLDARPTL (133 aa).

This sequence belongs to the alpha-IPM synthase/homocitrate synthase family. LeuA type 1 subfamily. As to quaternary structure, homodimer. It depends on Mn(2+) as a cofactor.

It is found in the cytoplasm. It catalyses the reaction 3-methyl-2-oxobutanoate + acetyl-CoA + H2O = (2S)-2-isopropylmalate + CoA + H(+). Its pathway is amino-acid biosynthesis; L-leucine biosynthesis; L-leucine from 3-methyl-2-oxobutanoate: step 1/4. Its function is as follows. Catalyzes the condensation of the acetyl group of acetyl-CoA with 3-methyl-2-oxobutanoate (2-ketoisovalerate) to form 3-carboxy-3-hydroxy-4-methylpentanoate (2-isopropylmalate). This chain is 2-isopropylmalate synthase, found in Parasynechococcus marenigrum (strain WH8102).